The chain runs to 134 residues: Phosphoribosyl-AMP cyclohydrolase (134 aa).

D80 contacts Mg(2+). C81 contacts Zn(2+). Mg(2+)-binding residues include D82 and D84. 2 residues coordinate Zn(2+): C98 and C105.

The protein belongs to the PRA-CH family. Homodimer. Mg(2+) serves as cofactor. Requires Zn(2+) as cofactor.

The protein localises to the cytoplasm. It carries out the reaction 1-(5-phospho-beta-D-ribosyl)-5'-AMP + H2O = 1-(5-phospho-beta-D-ribosyl)-5-[(5-phospho-beta-D-ribosylamino)methylideneamino]imidazole-4-carboxamide. The protein operates within amino-acid biosynthesis; L-histidine biosynthesis; L-histidine from 5-phospho-alpha-D-ribose 1-diphosphate: step 3/9. In terms of biological role, catalyzes the hydrolysis of the adenine ring of phosphoribosyl-AMP. The chain is Phosphoribosyl-AMP cyclohydrolase from Bordetella avium (strain 197N).